A 230-amino-acid polypeptide reads, in one-letter code: N-(5'-phosphoribosyl)anthranilate isomerase (230 aa).

This sequence belongs to the TrpF family.

The enzyme catalyses N-(5-phospho-beta-D-ribosyl)anthranilate = 1-(2-carboxyphenylamino)-1-deoxy-D-ribulose 5-phosphate. It participates in amino-acid biosynthesis; L-tryptophan biosynthesis; L-tryptophan from chorismate: step 3/5. This chain is N-(5'-phosphoribosyl)anthranilate isomerase, found in Syntrophus aciditrophicus (strain SB).